We begin with the raw amino-acid sequence, 279 residues long: Thymidylate synthase (279 aa).

Arg21 is a binding site for dUMP. His51 provides a ligand contact to (6R)-5,10-methylene-5,6,7,8-tetrahydrofolate. 126–127 (RR) lines the dUMP pocket. The active-site Nucleophile is the Cys159. Residues 179 to 182 (RSAD), Asn190, and 220 to 222 (HLY) each bind dUMP. (6R)-5,10-methylene-5,6,7,8-tetrahydrofolate is bound at residue Asp182. (6R)-5,10-methylene-5,6,7,8-tetrahydrofolate is bound at residue Ala278.

This sequence belongs to the thymidylate synthase family. Bacterial-type ThyA subfamily. In terms of assembly, homodimer.

It is found in the cytoplasm. It carries out the reaction dUMP + (6R)-5,10-methylene-5,6,7,8-tetrahydrofolate = 7,8-dihydrofolate + dTMP. It functions in the pathway pyrimidine metabolism; dTTP biosynthesis. Functionally, catalyzes the reductive methylation of 2'-deoxyuridine-5'-monophosphate (dUMP) to 2'-deoxythymidine-5'-monophosphate (dTMP) while utilizing 5,10-methylenetetrahydrofolate (mTHF) as the methyl donor and reductant in the reaction, yielding dihydrofolate (DHF) as a by-product. This enzymatic reaction provides an intracellular de novo source of dTMP, an essential precursor for DNA biosynthesis. In Marinobacter nauticus (strain ATCC 700491 / DSM 11845 / VT8) (Marinobacter aquaeolei), this protein is Thymidylate synthase.